The chain runs to 266 residues: Vitamin B12-binding protein (266 aa).

The signal sequence occupies residues 1–22; the sequence is MAKQMFRALGALLLTLPVWLYA. A Fe/B12 periplasmic-binding domain is found at 25 to 266; it reads RVITLSPANT…QLCNALSQVN (242 aa). Cyanocob(III)alamin contacts are provided by residues tyrosine 50 and 242–246; that span reads DWFER. A disulfide bond links cysteine 183 and cysteine 259.

Belongs to the BtuF family. In terms of assembly, the complex is composed of two ATP-binding proteins (BtuD), two transmembrane proteins (BtuC) and a solute-binding protein (BtuF).

Its subcellular location is the periplasm. Part of the ABC transporter complex BtuCDF involved in vitamin B12 import. Binds vitamin B12 and delivers it to the periplasmic surface of BtuC. In Salmonella typhi, this protein is Vitamin B12-binding protein.